Reading from the N-terminus, the 568-residue chain is Zinc finger protein 583 (568 aa).

A KRAB domain is found at Leu-6–Pro-77. C2H2-type zinc fingers lie at residues Leu-211–His-233, Tyr-239–His-261, Tyr-267–His-289, Tyr-295–His-317, Phe-323–His-345, Tyr-351–His-373, Tyr-379–His-401, Tyr-407–His-429, Tyr-435–His-457, Tyr-463–His-485, Tyr-491–His-513, and Tyr-519–His-541.

Belongs to the krueppel C2H2-type zinc-finger protein family.

The protein resides in the nucleus. May be involved in transcriptional regulation. The polypeptide is Zinc finger protein 583 (Znf583) (Mus musculus (Mouse)).